A 209-amino-acid chain; its full sequence is Large ribosomal subunit protein uL3 (209 aa).

The tract at residues 126 to 165 (HNFGGGSRTHGQSDRLRAPGSVGGSSDPSRTFRGTRMAGR) is disordered.

Belongs to the universal ribosomal protein uL3 family. Part of the 50S ribosomal subunit. Forms a cluster with proteins L14 and L19.

Its function is as follows. One of the primary rRNA binding proteins, it binds directly near the 3'-end of the 23S rRNA, where it nucleates assembly of the 50S subunit. The protein is Large ribosomal subunit protein uL3 of Chlorobium limicola (strain DSM 245 / NBRC 103803 / 6330).